The sequence spans 333 residues: Autoinducer 2 import system permease protein LsrC (333 aa).

Helical transmembrane passes span 14–34 (LIAI…YFSL), 39–59 (LVFS…LVML), 70–90 (IAGL…SLSV), 93–113 (LLTL…VTWL), 115–135 (IPAI…MLLL), 157–177 (LNIS…AWIL), 206–226 (IQII…IVFA), 252–272 (GISL…AFFL), and 284–304 (LPAW…LIFD).

This sequence belongs to the binding-protein-dependent transport system permease family. AraH/RbsC subfamily. As to quaternary structure, the complex is composed of two ATP-binding proteins (LsrA), two transmembrane proteins (LsrC and LsrD) and a solute-binding protein (LsrB).

It localises to the cell inner membrane. Part of the ABC transporter complex LsrABCD involved in autoinducer 2 (AI-2) import. Probably responsible for the translocation of the substrate across the membrane. The protein is Autoinducer 2 import system permease protein LsrC (lsrC) of Photorhabdus laumondii subsp. laumondii (strain DSM 15139 / CIP 105565 / TT01) (Photorhabdus luminescens subsp. laumondii).